The following is a 457-amino-acid chain: Multidrug resistance protein MdtK (457 aa).

The next 12 membrane-spanning stretches (helical) occupy residues 11–31 (LLAL…MGVV), 53–73 (IWLP…PVIA), 93–113 (VLAG…GYII), 127–147 (AVNY…FQVM), 160–180 (GMAM…IFIY), 188–208 (LGGV…FFCM), 243–263 (MPVA…ALLV), 276–296 (IALN…AAVT), 316–336 (RTGI…TVVF), 357–377 (LMLL…GSGV), 387–407 (IFFI…YILG), and 418–438 (PAGF…MMMW).

It belongs to the multi antimicrobial extrusion (MATE) (TC 2.A.66.1) family. MdtK subfamily.

The protein resides in the cell inner membrane. Its function is as follows. Multidrug efflux pump that functions probably as a Na(+)/drug antiporter. The polypeptide is Multidrug resistance protein MdtK (Cronobacter sakazakii (strain ATCC BAA-894) (Enterobacter sakazakii)).